A 570-amino-acid chain; its full sequence is Proline--tRNA ligase (570 aa).

This sequence belongs to the class-II aminoacyl-tRNA synthetase family. ProS type 1 subfamily. Homodimer.

It localises to the cytoplasm. It catalyses the reaction tRNA(Pro) + L-proline + ATP = L-prolyl-tRNA(Pro) + AMP + diphosphate. Catalyzes the attachment of proline to tRNA(Pro) in a two-step reaction: proline is first activated by ATP to form Pro-AMP and then transferred to the acceptor end of tRNA(Pro). As ProRS can inadvertently accommodate and process non-cognate amino acids such as alanine and cysteine, to avoid such errors it has two additional distinct editing activities against alanine. One activity is designated as 'pretransfer' editing and involves the tRNA(Pro)-independent hydrolysis of activated Ala-AMP. The other activity is designated 'posttransfer' editing and involves deacylation of mischarged Ala-tRNA(Pro). The misacylated Cys-tRNA(Pro) is not edited by ProRS. The sequence is that of Proline--tRNA ligase from Shewanella sp. (strain MR-4).